The chain runs to 518 residues: Membrane-bound lytic murein transglycosylase F (518 aa).

The signal sequence occupies residues 1-21 (MKKLKINYLFIGILALLLAVA). Positions 22-269 (LWPSIPWFGK…RIEEKYLGHG (248 aa)) are non-LT domain. Positions 270–518 (DDFDYVDTRT…SRKGSEEKQN (249 aa)) are LT domain. E314 is an active-site residue.

The protein in the N-terminal section; belongs to the bacterial solute-binding protein 3 family. It in the C-terminal section; belongs to the transglycosylase Slt family.

It is found in the cell outer membrane. It carries out the reaction Exolytic cleavage of the (1-&gt;4)-beta-glycosidic linkage between N-acetylmuramic acid (MurNAc) and N-acetylglucosamine (GlcNAc) residues in peptidoglycan, from either the reducing or the non-reducing ends of the peptidoglycan chains, with concomitant formation of a 1,6-anhydrobond in the MurNAc residue.. Functionally, murein-degrading enzyme that degrades murein glycan strands and insoluble, high-molecular weight murein sacculi, with the concomitant formation of a 1,6-anhydromuramoyl product. Lytic transglycosylases (LTs) play an integral role in the metabolism of the peptidoglycan (PG) sacculus. Their lytic action creates space within the PG sacculus to allow for its expansion as well as for the insertion of various structures such as secretion systems and flagella. This is Membrane-bound lytic murein transglycosylase F from Escherichia coli O157:H7.